A 465-amino-acid polypeptide reads, in one-letter code: Protein hedgehog (465 aa).

A lipid anchor (N-palmitoyl cysteine) is attached at Cys-79. Positions 143, 144, 149, 179, 180, 183, and 185 each coordinate Ca(2+). A lipid anchor (Cholesterol glycine ester) is attached at Gly-251.

The protein belongs to the hedgehog family. As to quaternary structure, interacts with shf. In terms of processing, the C-terminal part of the hedgehog protein precursor displays an autoproteolysis activity that results in the cleavage of the full-length protein into two parts (N-product and C-product). In addition, the C-terminal part displays a cholesterol transferase activity that results by the covalent attachment of a cholesterol moiety to the C-terminal of the newly generated N-product. The N-product is the active species in both local and long-range signaling, whereas the C-product has no signaling activity. Post-translationally, cholesterylation is required for N-product targeting to lipid rafts and multimerization. N-palmitoylation by Rasp of the hedgehog N-product, within the secretory pathway, is required for the embryonic and larval patterning activities of the hedgehog signal.

The protein localises to the nucleus. It localises to the cytoplasm. It is found in the cell membrane. The catalysed reaction is glycyl-L-cysteinyl-[protein] + cholesterol + H(+) = [protein]-C-terminal glycyl cholesterol ester + N-terminal L-cysteinyl-[protein]. In terms of biological role, the C-terminal part of the hedgehog protein precursor displays an autoproteolysis activity that results in the cleavage of the full-length protein into two parts (N-product and C-product). In addition, the C-terminal part displays a cholesterol transferase activity that results by the covalent attachment of a cholesterol moiety to the C-terminal of the newly generated N-product. Once cleaved, the C-product has no signaling activity and diffuses from the cell. Its function is as follows. The dually lipidated hedgehog protein N-product is a morphogen which is essential for a variety of patterning events during development. Establishes the anterior-posterior axis of the embryonic segments and patterns the larval imaginal disks. Binds to the patched (ptc) receptor, which functions in association with smoothened (smo), to activate the transcription of target genes wingless (wg), decapentaplegic (dpp) and ptc. In the absence of hh, ptc represses the constitutive signaling activity of smo through fused (fu). Essential component of a signaling pathway which regulates the Duox-dependent gut immune response to bacterial uracil; required to activate Cad99C-dependent endosome formation, norpA-dependent Ca2+ mobilization and p38 MAPK, which are essential steps in the Duox-dependent production of reactive oxygen species (ROS) in response to intestinal bacterial infection. During photoreceptor differentiation, it up-regulates transcription of Ubr3, which in turn promotes the hh-signaling pathway by mediating the ubiquitination and degradation of cos. This Drosophila erecta (Fruit fly) protein is Protein hedgehog.